A 304-amino-acid polypeptide reads, in one-letter code: uncharacterized protein (304 aa).

It belongs to the mimivirus L137 family.

This is an uncharacterized protein from Acanthamoeba polyphaga mimivirus (APMV).